We begin with the raw amino-acid sequence, 429 residues long: Zinc finger protein 275 (429 aa).

The disordered stretch occupies residues 31–95; that stretch reads VSDPSPNTDP…DGKRGSPQNL (65 aa). The segment covering 34–51 has biased composition (polar residues); sequence PSPNTDPAKYSESTSATR. Residue Ser76 is modified to Phosphoserine. Over residues 79 to 89 the composition is skewed to basic and acidic residues; it reads FRQHGDSDGKR. 2 consecutive C2H2-type zinc fingers follow at residues 101-123 and 129-151; these read FACK…QRVH and WECG…RKSH. Residues 149-176 form a disordered region; the sequence is KSHVAAEPQPGPSRALENAAEKREQMER. A compositionally biased stretch (basic and acidic residues) spans 167–176; that stretch reads AAEKREQMER. 9 consecutive C2H2-type zinc fingers follow at residues 181-203, 209-231, 237-259, 265-287, 293-315, 321-343, 349-371, 377-399, and 405-427; these read FECE…LRVH, FDCE…QKLH, FACK…QRMH, FDCD…QRIH, YGCP…RRIH, YACG…ARIH, YACG…RRIH, YECD…RRIH, and CECS…QPTH.

Belongs to the krueppel C2H2-type zinc-finger protein family.

Its subcellular location is the nucleus. May be involved in transcriptional regulation. The protein is Zinc finger protein 275 (ZNF275) of Homo sapiens (Human).